The following is a 205-amino-acid chain: DNA-directed RNA polymerase RPB5 homolog (205 aa).

This sequence belongs to the archaeal RpoH/eukaryotic RPB5 RNA polymerase subunit family. Part of the viral DNA-directed RNA polymerase that consists of 8 polII-like subunits (RPB1, RPB2, RPB3, RPB5, RPB6, RPB7, RPB9, RPB10), a capping enzyme and a termination factor.

Its subcellular location is the host cytoplasm. The protein resides in the virion. In terms of biological role, component of the DNA-directed RNA polymerase (RNAP) that catalyzes the transcription in the cytoplasm of viral DNA into RNA using the four ribonucleoside triphosphates as substrates. The sequence is that of DNA-directed RNA polymerase RPB5 homolog from African swine fever virus (isolate Pig/Kenya/KEN-50/1950) (ASFV).